The primary structure comprises 912 residues: Protein transport protein SEC24-2 (912 aa).

Positions 1–11 (MSNPSRPKKRV) are enriched in basic residues. 2 disordered regions span residues 1 to 83 (MSNP…QQIS) and 102 to 129 (PNAY…PGRP). Composition is skewed to polar residues over residues 33–45 (SGQT…SGSA), 53–74 (GQFT…MTPA), and 106–129 (YQPN…PGRP). Residues Cys226, Cys229, Cys248, and Cys251 each coordinate Zn(2+). A zinc finger-like region spans residues 226–251 (CRRCRGYLNPFVKILQVESKWRCNFC).

The protein belongs to the SEC23/SEC24 family. SEC24 subfamily. The COPII coat is composed of at least 5 proteins: the SEC23/24 complex, the SEC13/31 complex, and the protein SAR1. Golgi apparatus membrane; Peripheral membrane protein; Cytoplasmic side.

The protein localises to the cytoplasm. The protein resides in the cytoplasmic vesicle. It localises to the COPII-coated vesicle membrane. Its subcellular location is the endoplasmic reticulum membrane. It is found in the golgi apparatus membrane. Component of the coat protein complex II (COPII) which promotes the formation of transport vesicles from the endoplasmic reticulum (ER). The coat has two main functions, the physical deformation of the endoplasmic reticulum membrane into vesicles and the selection of cargo molecules. This Naumovozyma castellii (Yeast) protein is Protein transport protein SEC24-2 (SEC242).